A 506-amino-acid polypeptide reads, in one-letter code: MSFSVEVLAGIAIELQRGIGHQDRFQRLITTLRQVLACDASALLRYESRQFIPLAIDGLAQDVLGRRFTLEGHPRLEAIARAGDVVRFPADSDLPDPYDGLIPGQESLKVHACVGLPLFAGQNLIGALTLDAMTPEQFEVFSDEELRLVAALAAGALSNALLIEQLESQNILPGSSGVFEPIKETHMIGLSPAMTQLKKEIEIVAGSDLNVLIGGETGTGKELVAKAIHQGSPRAVNPLVYLNCAALPESVAESELFGHVKGAFTGAISNRSGKFEMADNGTLFLDEIGELSLALQAKLLRVLQYGDIQRVGDDRSLRVDVRVLAATNRDLREEVLAGRFRADLFHRLSVFPLFVPPLRERGDDVVLLAGYFCEQCRLRLGLSRVVLSTGARRHLLNYGWPGNVRELEHAIHRAVVLARATRAGDEVILEAQHFALSEDVLPAPPAESFLALPTCRNLRESTENFQREMIRQALAQNNHNWAASARALETDVANLHRLAKRLGLKD.

The residue at position 57 (D57) is a 4-aspartylphosphate. A Sigma-54 factor interaction domain is found at 187-416; the sequence is MIGLSPAMTQ…LEHAIHRAVV (230 aa). Residues 215–222 and 278–287 each bind ATP; these read GETGTGKE and ADNGTLFLDE. A DNA-binding region (H-T-H motif) is located at residues 481–500; it reads WAASARALETDVANLHRLAK.

It participates in nitrogen metabolism; nitric oxide reduction. Its function is as follows. Required for the expression of anaerobic nitric oxide (NO) reductase, acts as a transcriptional activator for at least the norVW operon. Activation also requires sigma-54. In Salmonella newport (strain SL254), this protein is Anaerobic nitric oxide reductase transcription regulator NorR.